A 211-amino-acid chain; its full sequence is Glutathione S-transferase class-mu 28 kDa isozyme (211 aa).

Residue Ala2 is modified to N-acetylalanine. The GST N-terminal domain maps to 4–86 (EHIKVIYFDG…YMAKKHHMMG (83 aa)). Glutathione contacts are provided by residues Tyr10, 10 to 11 (YF), Arg16, 41 to 45 (WPKIK), Leu53, 55 to 56 (AV), and 70 to 71 (ES). In terms of domain architecture, GST C-terminal spans 88–211 (TDEEYYSVEK…YLSNRPATPF (124 aa)).

It belongs to the GST superfamily. Mu family. Homodimer. In terms of tissue distribution, in the adult, expressed in excretory epithelial cells but absent from the caecal epithelium and flame cells. Also expressed in the tegument and its extensions into the parenchyma. In the schistosomulum, expressed in the tegument and associated structures. Not expressed in digestive tract, reproductive organs or muscles (at protein level).

It catalyses the reaction RX + glutathione = an S-substituted glutathione + a halide anion + H(+). Functionally, conjugation of reduced glutathione to a wide number of exogenous and endogenous hydrophobic electrophiles. In terms of biological role, GST isoenzymes appear to play a central role in the parasite detoxification system. Other functions are also suspected including a role in increasing the solubility of haematin in the parasite gut. This Schistosoma mansoni (Blood fluke) protein is Glutathione S-transferase class-mu 28 kDa isozyme (GST28).